We begin with the raw amino-acid sequence, 91 residues long: Small ribosomal subunit protein uS19 (91 aa).

It belongs to the universal ribosomal protein uS19 family.

Protein S19 forms a complex with S13 that binds strongly to the 16S ribosomal RNA. This Desulfotalea psychrophila (strain LSv54 / DSM 12343) protein is Small ribosomal subunit protein uS19.